The following is a 100-amino-acid chain: Urease subunit gamma (100 aa).

This sequence belongs to the urease gamma subunit family. Heterotrimer of UreA (gamma), UreB (beta) and UreC (alpha) subunits. Three heterotrimers associate to form the active enzyme.

It localises to the cytoplasm. The catalysed reaction is urea + 2 H2O + H(+) = hydrogencarbonate + 2 NH4(+). Its pathway is nitrogen metabolism; urea degradation; CO(2) and NH(3) from urea (urease route): step 1/1. This Jannaschia sp. (strain CCS1) protein is Urease subunit gamma.